A 647-amino-acid chain; its full sequence is DNA mismatch repair protein MutL (647 aa).

A compositionally biased stretch (basic and acidic residues) spans 387 to 400 (SAKPVHEATDEKAE). The disordered stretch occupies residues 387 to 412 (SAKPVHEATDEKAEPQSTSVKFAERK).

The protein belongs to the DNA mismatch repair MutL/HexB family.

In terms of biological role, this protein is involved in the repair of mismatches in DNA. It is required for dam-dependent methyl-directed DNA mismatch repair. May act as a 'molecular matchmaker', a protein that promotes the formation of a stable complex between two or more DNA-binding proteins in an ATP-dependent manner without itself being part of a final effector complex. This Streptococcus sanguinis (strain SK36) protein is DNA mismatch repair protein MutL.